The chain runs to 475 residues: Sulfate adenylyltransferase subunit 1 (475 aa).

One can recognise a tr-type G domain in the interval 25-239 (KSLLRFLTCG…EVLETVEIQR (215 aa)). Residues 34–41 (GSVDDGKS) form a G1 region. 34-41 (GSVDDGKS) is a GTP binding site. Residues 92–96 (GITID) form a G2 region. The tract at residues 113–116 (DTPG) is G3. GTP-binding positions include 113–117 (DTPGH) and 168–171 (NKMD). Positions 168–171 (NKMD) are G4. The G5 stretch occupies residues 206-208 (SAL).

This sequence belongs to the TRAFAC class translation factor GTPase superfamily. Classic translation factor GTPase family. CysN/NodQ subfamily. Heterodimer composed of CysD, the smaller subunit, and CysN.

It catalyses the reaction sulfate + ATP + H(+) = adenosine 5'-phosphosulfate + diphosphate. Its pathway is sulfur metabolism; hydrogen sulfide biosynthesis; sulfite from sulfate: step 1/3. With CysD forms the ATP sulfurylase (ATPS) that catalyzes the adenylation of sulfate producing adenosine 5'-phosphosulfate (APS) and diphosphate, the first enzymatic step in sulfur assimilation pathway. APS synthesis involves the formation of a high-energy phosphoric-sulfuric acid anhydride bond driven by GTP hydrolysis by CysN coupled to ATP hydrolysis by CysD. The protein is Sulfate adenylyltransferase subunit 1 of Escherichia coli (strain UTI89 / UPEC).